A 687-amino-acid polypeptide reads, in one-letter code: Dictomallein (687 aa).

2 disordered regions span residues 1 to 45 (MGNG…SRRL) and 73 to 112 (TAGG…STSA). The Peptidase M66 domain occupies 233–501 (PVFGTDADVQ…QAWIASRVLA (269 aa)). His393 serves as a coordination point for Zn(2+). Glu394 is an active-site residue. Zn(2+) contacts are provided by His397 and His403.

This sequence belongs to the dictomallein family. Zn(2+) serves as cofactor.

The chain is Dictomallein (dtmL) from Burkholderia pseudomallei (strain 1710b).